A 545-amino-acid chain; its full sequence is Chaperonin GroEL (545 aa).

ATP-binding positions include 30 to 33 (TLGP), Lys51, 87 to 91 (DGTTT), Gly415, 483 to 485 (NAA), and Asp499.

It belongs to the chaperonin (HSP60) family. As to quaternary structure, forms a cylinder of 14 subunits composed of two heptameric rings stacked back-to-back. Interacts with the co-chaperonin GroES.

Its subcellular location is the cytoplasm. The enzyme catalyses ATP + H2O + a folded polypeptide = ADP + phosphate + an unfolded polypeptide.. Its function is as follows. Together with its co-chaperonin GroES, plays an essential role in assisting protein folding. The GroEL-GroES system forms a nano-cage that allows encapsulation of the non-native substrate proteins and provides a physical environment optimized to promote and accelerate protein folding. The polypeptide is Chaperonin GroEL (Aquifex aeolicus (strain VF5)).